A 464-amino-acid chain; its full sequence is tRNA modification GTPase MnmE (464 aa).

Positions 27, 90, and 129 each coordinate (6S)-5-formyl-5,6,7,8-tetrahydrofolate. Residues 222–384 enclose the TrmE-type G domain; the sequence is GVTLVLAGSV…LYDRIRSFIA (163 aa). Residues 232-237, 251-257, and 276-279 contribute to the GTP site; these read NVGKSS, SSYAGTT, and DTAG. Serine 236 lines the Mg(2+) pocket. Serine 251 is a K(+) binding site. Threonine 257 contributes to the Mg(2+) binding site. Lysine 464 contacts (6S)-5-formyl-5,6,7,8-tetrahydrofolate.

The protein belongs to the TRAFAC class TrmE-Era-EngA-EngB-Septin-like GTPase superfamily. TrmE GTPase family. In terms of assembly, homodimer. Heterotetramer of two MnmE and two MnmG subunits. The cofactor is K(+).

The protein localises to the cytoplasm. Exhibits a very high intrinsic GTPase hydrolysis rate. Involved in the addition of a carboxymethylaminomethyl (cmnm) group at the wobble position (U34) of certain tRNAs, forming tRNA-cmnm(5)s(2)U34. The polypeptide is tRNA modification GTPase MnmE (Borrelia recurrentis (strain A1)).